A 292-amino-acid polypeptide reads, in one-letter code: Ribonuclease HIII (292 aa).

In terms of domain architecture, RNase H type-2 spans 76-292; the sequence is TNLIGTDEVG…TQKAIKIAQL (217 aa). A divalent metal cation contacts are provided by Asp82, Glu83, and Asp186.

The protein belongs to the RNase HII family. RnhC subfamily. Requires Mn(2+) as cofactor. Mg(2+) is required as a cofactor.

The protein resides in the cytoplasm. The enzyme catalyses Endonucleolytic cleavage to 5'-phosphomonoester.. Endonuclease that specifically degrades the RNA of RNA-DNA hybrids. The sequence is that of Ribonuclease HIII from Lactococcus lactis subsp. lactis (strain IL1403) (Streptococcus lactis).